A 103-amino-acid polypeptide reads, in one-letter code: Large ribosomal subunit protein bL21 (103 aa).

It belongs to the bacterial ribosomal protein bL21 family. Part of the 50S ribosomal subunit. Contacts protein L20.

Functionally, this protein binds to 23S rRNA in the presence of protein L20. In Chromohalobacter salexigens (strain ATCC BAA-138 / DSM 3043 / CIP 106854 / NCIMB 13768 / 1H11), this protein is Large ribosomal subunit protein bL21.